The primary structure comprises 227 residues: 2-C-methyl-D-erythritol 4-phosphate cytidylyltransferase (227 aa).

Belongs to the IspD/TarI cytidylyltransferase family. IspD subfamily.

The enzyme catalyses 2-C-methyl-D-erythritol 4-phosphate + CTP + H(+) = 4-CDP-2-C-methyl-D-erythritol + diphosphate. It participates in isoprenoid biosynthesis; isopentenyl diphosphate biosynthesis via DXP pathway; isopentenyl diphosphate from 1-deoxy-D-xylulose 5-phosphate: step 2/6. Catalyzes the formation of 4-diphosphocytidyl-2-C-methyl-D-erythritol from CTP and 2-C-methyl-D-erythritol 4-phosphate (MEP). This is 2-C-methyl-D-erythritol 4-phosphate cytidylyltransferase from Dehalococcoides mccartyi (strain CBDB1).